The sequence spans 62 residues: Small ribosomal subunit protein uS14 (62 aa).

Zn(2+) is bound by residues Cys25, Cys28, Cys41, and Cys44.

It belongs to the universal ribosomal protein uS14 family. Zinc-binding uS14 subfamily. As to quaternary structure, part of the 30S ribosomal subunit. Contacts proteins S3 and S10. Zn(2+) is required as a cofactor.

Binds 16S rRNA, required for the assembly of 30S particles and may also be responsible for determining the conformation of the 16S rRNA at the A site. This chain is Small ribosomal subunit protein uS14, found in Persephonella marina (strain DSM 14350 / EX-H1).